The sequence spans 476 residues: Adenosylhomocysteinase (476 aa).

3 residues coordinate substrate: Thr62, Asp141, and Glu201. Position 202-204 (202-204 (TTT)) interacts with NAD(+). Lys231 and Asp235 together coordinate substrate. NAD(+) is bound by residues Asn236, 265 to 270 (GYGDVG), Glu288, Asn323, 344 to 346 (IGH), and Asn389.

The protein belongs to the adenosylhomocysteinase family. It depends on NAD(+) as a cofactor.

The protein resides in the cytoplasm. The catalysed reaction is S-adenosyl-L-homocysteine + H2O = L-homocysteine + adenosine. The protein operates within amino-acid biosynthesis; L-homocysteine biosynthesis; L-homocysteine from S-adenosyl-L-homocysteine: step 1/1. Functionally, may play a key role in the regulation of the intracellular concentration of adenosylhomocysteine. The sequence is that of Adenosylhomocysteinase from Delftia acidovorans (strain DSM 14801 / SPH-1).